Here is a 597-residue protein sequence, read N- to C-terminus: Medium/long-chain-fatty-acid--CoA ligase FadD6 (597 aa).

It belongs to the ATP-dependent AMP-binding enzyme family.

The enzyme catalyses a medium-chain fatty acid + ATP + CoA = a medium-chain fatty acyl-CoA + AMP + diphosphate. It carries out the reaction a long-chain fatty acid + ATP + CoA = a long-chain fatty acyl-CoA + AMP + diphosphate. It catalyses the reaction hexanoate + ATP + CoA = hexanoyl-CoA + AMP + diphosphate. The catalysed reaction is octanoate + ATP + CoA = octanoyl-CoA + AMP + diphosphate. The enzyme catalyses decanoate + ATP + CoA = decanoyl-CoA + AMP + diphosphate. It carries out the reaction dodecanoate + ATP + CoA = dodecanoyl-CoA + AMP + diphosphate. It catalyses the reaction tetradecanoate + ATP + CoA = tetradecanoyl-CoA + AMP + diphosphate. The catalysed reaction is hexadecanoate + ATP + CoA = hexadecanoyl-CoA + AMP + diphosphate. The enzyme catalyses octadecanoate + ATP + CoA = octadecanoyl-CoA + AMP + diphosphate. It carries out the reaction 9-decenoate + ATP + CoA = 9-decenoyl-CoA + AMP + diphosphate. It catalyses the reaction (9Z)-octadecenoate + ATP + CoA = (9Z)-octadecenoyl-CoA + AMP + diphosphate. The catalysed reaction is 2-hydroxyhexadecanoate + ATP + CoA = 2-hydroxyhexadecanoyl-CoA + AMP + diphosphate. The enzyme catalyses 3-hydroxytetradecanoate + ATP + CoA = 3-hydroxytetradecanoyl-CoA + AMP + diphosphate. It carries out the reaction 12-hydroxyoctadecanoate + ATP + CoA = 12-hydroxyoctadecanoyl-CoA + AMP + diphosphate. It catalyses the reaction 15-hydroxypentadecanoate + ATP + CoA = 15-hydroxypentadecanoyl-CoA + AMP + diphosphate. The catalysed reaction is 16-hydroxyhexadecanoate + ATP + CoA = 16-hydroxyhexadecanoyl-CoA + AMP + diphosphate. The enzyme catalyses 2-methylhexadecanoate + ATP + CoA = 2-methylhexadecanoyl-CoA + AMP + diphosphate. It carries out the reaction 3-methylundecanoate + ATP + CoA = 3-methylundecanoyl-CoA + AMP + diphosphate. It catalyses the reaction 12-methyltridecanoate + ATP + CoA = 12-methyltridecanoyl-CoA + AMP + diphosphate. The catalysed reaction is 12-methyloctadecanoate + ATP + CoA = 12-methyloctadecanoyl-CoA + AMP + diphosphate. In terms of biological role, catalyzes the activation of medium/long-chain fatty acids as acyl-coenzyme A (acyl-CoA). May play a role in the uptake of fatty acids by trapping them metabolically as CoA esters. May also play an important role in the channeling of fatty acids into triacylglycerol (TAG) for use by Mycobacterium during its dormancy. In Mycobacterium tuberculosis (strain ATCC 25618 / H37Rv), this protein is Medium/long-chain-fatty-acid--CoA ligase FadD6.